A 458-amino-acid chain; its full sequence is NADH-quinone oxidoreductase subunit N (458 aa).

The next 14 membrane-spanning stretches (helical) occupy residues 2–22, 30–50, 62–82, 93–113, 118–138, 153–173, 196–216, 235–255, 261–281, 290–310, 319–339, 361–381, 397–417, and 438–458; these read LLIL…CFAL, IIYN…FKYS, GINI…SLII, AIKF…FVAI, FLLL…LAGF, FILG…IYGF, LIIG…SSPL, FTSA…KLII, INYN…AFGA, LMAY…ILPN, LYIL…IMLF, IAAL…LTGF, FTLA…YLKV, and LLLI…IILF.

Belongs to the complex I subunit 2 family. NDH-1 is composed of 14 different subunits. Subunits NuoA, H, J, K, L, M, N constitute the membrane sector of the complex.

Its subcellular location is the cell inner membrane. The enzyme catalyses a quinone + NADH + 5 H(+)(in) = a quinol + NAD(+) + 4 H(+)(out). In terms of biological role, NDH-1 shuttles electrons from NADH, via FMN and iron-sulfur (Fe-S) centers, to quinones in the respiratory chain. The immediate electron acceptor for the enzyme in this species is believed to be ubiquinone. Couples the redox reaction to proton translocation (for every two electrons transferred, four hydrogen ions are translocated across the cytoplasmic membrane), and thus conserves the redox energy in a proton gradient. In Rickettsia typhi (strain ATCC VR-144 / Wilmington), this protein is NADH-quinone oxidoreductase subunit N.